The primary structure comprises 505 residues: Zinc metalloproteinase/disintegrin (505 aa).

An N-terminal signal peptide occupies residues 1–20 (MIQVLLVIICLAAFPYQGTS). The propeptide occupies 21 to 214 (IILESGNVND…PIKKASQSNL (194 aa)). A run of 2 repeats spans residues 153-179 (KYEDVEKEDEAPKMCGVTQNWESYEPI) and 180-206 (KYEDVEKEDEAPKMCGVTQNWESYEPI). Positions 220–416 (RYIELVIVAD…QKPQCILNKP (197 aa)) constitute a Peptidase M12B domain. Positions 223 and 307 each coordinate Ca(2+). Histidine 356 contacts Zn(2+). Glutamate 357 is an active-site residue. Zn(2+) is bound by residues histidine 360 and histidine 366. Cystine bridges form between cysteine 371/cysteine 395 and cysteine 373/cysteine 378. 2 residues coordinate Ca(2+): cysteine 411 and asparagine 414. Residues 417 to 432 (LRTDTVSTPVSGNELL) constitute a propeptide that is removed on maturation. Residues 424 to 505 (TPVSGNELLE…AGCPRNPFHA (82 aa)) form the Disintegrin domain. 6 disulfides stabilise this stretch: cysteine 438/cysteine 453, cysteine 440/cysteine 448, cysteine 447/cysteine 470, cysteine 461/cysteine 467, cysteine 466/cysteine 491, and cysteine 479/cysteine 498. The Cell attachment site signature appears at 483 to 485 (RGD).

Belongs to the venom metalloproteinase (M12B) family. P-II subfamily. P-IIa sub-subfamily. In terms of assembly, monomer. Zn(2+) serves as cofactor. In terms of tissue distribution, expressed by the venom gland.

Its subcellular location is the secreted. Impairs hemostasis in the envenomed animal. Its function is as follows. Inhibits platelet aggregation induced by ADP, thrombin, platelet-activating factor and collagen. Acts by inhibiting fibrinogen interaction with platelet receptors GPIIb/GPIIIa (ITGA2B/ITGB3). The chain is Zinc metalloproteinase/disintegrin from Gloydius brevicauda (Korean slamosa snake).